We begin with the raw amino-acid sequence, 414 residues long: Chaperone protein dnaJ 39 (414 aa).

The span at 1-24 shows a compositional bias: basic and acidic residues; that stretch reads MATHSSRSENKDAGEEDELRRRNP. A disordered region spans residues 1 to 36; that stretch reads MATHSSRSENKDAGEEDELRRRNPYEVLGIPSNSTD. Positions 23-88 constitute a J domain; the sequence is NPYEVLGIPS…ENRRLYDTTG (66 aa). The stretch at 296-324 forms a coiled coil; that stretch reads EKESLRSTEAQIVSKRTELLKFEAEYHEV. The disordered stretch occupies residues 362–395; that stretch reads TKQGSSKSRSWSKKKSSLLMEPREEGEVAVREEG. Residues 382 to 395 are compositionally biased toward basic and acidic residues; sequence EPREEGEVAVREEG.

This sequence belongs to the DnaJ family. C/III subfamily. As to expression, expressed constitutively at low levels in seedlings, roots, leaves, stems, flowers and siliques.

Its subcellular location is the membrane. Its function is as follows. Plays a continuous role in plant development probably in the structural organization of compartments. Seems to be involved in early gravitropic signal transduction within the gravity-perceiving cells (statocytes). The polypeptide is Chaperone protein dnaJ 39 (ATJ39) (Arabidopsis thaliana (Mouse-ear cress)).